A 331-amino-acid chain; its full sequence is E3 ubiquitin-protein ligase Siah2 (331 aa).

The disordered stretch occupies residues 1-26 (MSRPSSAGGAAGGLGAGKAGGSKHGG). The span at 9 to 26 (GAAGGLGAGKAGGSKHGG) shows a compositional bias: gly residues. Residues 89-124 (CPVCFDYVLPPILQCQAGHLVCNQCRQKLSCCPTCR) form an RING-type zinc finger. The segment at 139–331 (VASTLPFPCK…LGINVTISMC (193 aa)) is SBD. An SIAH-type zinc finger spans residues 142 to 202 (TLPFPCKYSS…VMPHLMHAHK (61 aa)). The Zn(2+) site is built by cysteine 147, cysteine 154, histidine 166, cysteine 170, cysteine 177, cysteine 184, histidine 196, and histidine 201.

The protein belongs to the SINA (Seven in absentia) family. As to quaternary structure, homodimer. As to expression, in embryos it is expressed in all blastomeres starting at the mid-blastulla. After 20 somite stage, it is expressed mainly in the posterior part. Expressed in brain, including the eye, the cranial cavity, otic vesicle, optic chiasm and in the gut.

It catalyses the reaction S-ubiquitinyl-[E2 ubiquitin-conjugating enzyme]-L-cysteine + [acceptor protein]-L-lysine = [E2 ubiquitin-conjugating enzyme]-L-cysteine + N(6)-ubiquitinyl-[acceptor protein]-L-lysine.. Its pathway is protein modification; protein ubiquitination. Functionally, E3 ubiquitin-protein ligase that mediates ubiquitination and subsequent proteasomal degradation of target proteins. E3 ubiquitin ligases accept ubiquitin from an E2 ubiquitin-conjugating enzyme in the form of a thioester and then directly transfers the ubiquitin to targeted substrates. It probably triggers the ubiquitin-mediated degradation of different substrates. Induces cellular growth arrest by inhibiting the G2/M transition. May play a role in the regulation of the cellular clock function. This is E3 ubiquitin-protein ligase Siah2 (siah2l) from Danio rerio (Zebrafish).